We begin with the raw amino-acid sequence, 318 residues long: Pantothenate kinase (318 aa).

G96–S103 is a binding site for ATP.

Belongs to the prokaryotic pantothenate kinase family.

The protein resides in the cytoplasm. The catalysed reaction is (R)-pantothenate + ATP = (R)-4'-phosphopantothenate + ADP + H(+). The protein operates within cofactor biosynthesis; coenzyme A biosynthesis; CoA from (R)-pantothenate: step 1/5. This Rhodopseudomonas palustris (strain HaA2) protein is Pantothenate kinase.